A 356-amino-acid polypeptide reads, in one-letter code: 45 kDa calcium-binding protein (356 aa).

The first 29 residues, 1–29 (MMSRQAFLCSLGSLYLSLLFVFLLMDVYA), serve as a signal peptide directing secretion. The N-linked (GlcNAc...) asparagine glycan is linked to asparagine 33. 5 EF-hand domains span residues 92–127 (KNRK…KTDE), 131–166 (EAVE…SKGL), 227–262 (MLKF…TVEN), 272–307 (WVKD…MNEY), and 308–343 (NALN…FTGS). Positions 105, 107, 109, 111, 116, 144, 146, 148, 150, 155, 240, 242, 244, 246, 251, 285, 287, 289, 296, 321, 323, 325, 327, and 332 each coordinate Ca(2+).

It belongs to the CREC family.

The protein localises to the golgi apparatus lumen. In terms of biological role, may regulate calcium-dependent activities in the endoplasmic reticulum lumen or post-ER compartment. The sequence is that of 45 kDa calcium-binding protein (SDF4) from Gallus gallus (Chicken).